We begin with the raw amino-acid sequence, 202 residues long: Nucleoside triphosphate pyrophosphatase (202 aa).

Asp79 acts as the Proton acceptor in catalysis.

It belongs to the Maf family. A divalent metal cation is required as a cofactor.

Its subcellular location is the cytoplasm. It carries out the reaction a ribonucleoside 5'-triphosphate + H2O = a ribonucleoside 5'-phosphate + diphosphate + H(+). The enzyme catalyses a 2'-deoxyribonucleoside 5'-triphosphate + H2O = a 2'-deoxyribonucleoside 5'-phosphate + diphosphate + H(+). Its function is as follows. Nucleoside triphosphate pyrophosphatase. May have a dual role in cell division arrest and in preventing the incorporation of modified nucleotides into cellular nucleic acids. This is Nucleoside triphosphate pyrophosphatase from Rhodopseudomonas palustris (strain HaA2).